The sequence spans 385 residues: Endoglucanase 1 (385 aa).

The signal sequence occupies residues 1-17 (MKLVFSALASLLSGASA). N93 and N140 each carry an N-linked (GlcNAc...) asparagine glycan. E176 serves as the catalytic Proton donor. N-linked (GlcNAc...) asparagine glycosylation is found at N200 and N237. Residue E284 is the Nucleophile of the active site. N-linked (GlcNAc...) asparagine glycans are attached at residues N289 and N331.

Belongs to the glycosyl hydrolase 5 (cellulase A) family.

It catalyses the reaction Endohydrolysis of (1-&gt;4)-beta-D-glucosidic linkages in cellulose, lichenin and cereal beta-D-glucans.. Its pathway is glycan metabolism; cellulose degradation. Its function is as follows. Active towards carboxymethyl cellulose. The protein is Endoglucanase 1 (eg 1) of Robillarda sp. (strain Y-20).